The primary structure comprises 197 residues: dITP/XTP pyrophosphatase (197 aa).

8 to 13 (TGNAGK) provides a ligand contact to substrate. Mg(2+) contacts are provided by Glu40 and Asp69. The active-site Proton acceptor is the Asp69. Substrate-binding positions include Ser70, 154–157 (FGYD), Lys177, and 182–183 (HR).

Belongs to the HAM1 NTPase family. As to quaternary structure, homodimer. Requires Mg(2+) as cofactor.

It carries out the reaction XTP + H2O = XMP + diphosphate + H(+). The catalysed reaction is dITP + H2O = dIMP + diphosphate + H(+). The enzyme catalyses ITP + H2O = IMP + diphosphate + H(+). Its function is as follows. Pyrophosphatase that catalyzes the hydrolysis of nucleoside triphosphates to their monophosphate derivatives, with a high preference for the non-canonical purine nucleotides XTP (xanthosine triphosphate), dITP (deoxyinosine triphosphate) and ITP. Seems to function as a house-cleaning enzyme that removes non-canonical purine nucleotides from the nucleotide pool, thus preventing their incorporation into DNA/RNA and avoiding chromosomal lesions. The polypeptide is dITP/XTP pyrophosphatase (rdgB) (Salmonella paratyphi A (strain ATCC 9150 / SARB42)).